A 2190-amino-acid polypeptide reads, in one-letter code: Highly-reducing polyketide synthase 1 (2190 aa).

A Ketosynthase family 3 (KS3) domain is found at 6 to 431 (LTPVAIVGYA…GANAHVVLGA (426 aa)). Catalysis depends on for beta-ketoacyl synthase activity residues cysteine 179, histidine 315, and histidine 355. The Malonyl-CoA:ACP transacylase (MAT) domain maps to 541 to 857 (FVFTGQGAQW…VSVLARGQNA (317 aa)). Positions 925–1061 (NDLLGSLADW…GLVGVRNSPA (137 aa)) are N-terminal hotdog fold. The 322-residue stretch at 925-1246 (NDLLGSLADW…MTPLRESSGS (322 aa)) folds into the PKS/mFAS DH domain. Histidine 957 (proton acceptor; for dehydratase activity) is an active-site residue. Residues 1089–1246 (TETVDVQAMY…MTPLRESSGS (158 aa)) are C-terminal hotdog fold. The Proton donor; for dehydratase activity role is filled by aspartate 1154. In terms of domain architecture, Enoyl reductase (ER) spans 1494-1804 (GSLDSFYFVD…SGKSMGKLVI (311 aa)). Residues 1828–2005 (ASYLIVGGTG…GTSLDLTAVS (178 aa)) enclose the Ketoreductase (KR) domain. Residues 2107-2184 (KALEVLYGAL…ELAKLISKKS (78 aa)) form the Carrier domain. At serine 2144 the chain carries O-(pantetheine 4'-phosphoryl)serine.

The cofactor is pantetheine 4'-phosphate.

Its function is as follows. Highly-reducing polyketide synthase; part of the gene cluster that mediates the biosynthesis of liamocins, glycolipids (also called heavy oils) composed of a single mannitol or arabitol headgroup linked to either three, four or even six 3,5-dihydroxydecanoic ester tail-groups. Within the pathway, PKS1 is responsible for biosynthesis of 3,5-dihydroxydecanoic acid from acetyl-CoA and malonyl-CoA. A phosphopantetheine transferase (PPTase) activates the HR-PKS. The esterase EST1 then catalyzes ester bond formation between 3,5-dihydroxydecanoic acid and mannitol (provided by the mannitol-1-phosphate 5-dehydrogenase and the NADP-dependent mannitol dehydrogenase) or arabinol (provided by the L-arabinitol 4-dehydrogenase). The sequence is that of Highly-reducing polyketide synthase 1 from Aureobasidium melanogenum (Aureobasidium pullulans var. melanogenum).